The following is a 676-amino-acid chain: Probable ERAD-associated E3 ubiquitin-protein ligase ASI1 (676 aa).

The Perinuclear space segment spans residues Met-1–Arg-78. Asn-24, Asn-34, Asn-46, and Asn-66 each carry an N-linked (GlcNAc...) asparagine glycan. Residues Met-79–Leu-99 form a helical membrane-spanning segment. Over Asn-100–His-126 the chain is Nuclear. A helical transmembrane segment spans residues Leu-127 to Met-147. The Perinuclear space portion of the chain corresponds to His-148–Asp-156. Residues Phe-157–Ser-177 traverse the membrane as a helical segment. Residues Ser-178 to Asn-181 lie on the Nuclear side of the membrane. Residues Val-182–Ile-202 form a helical membrane-spanning segment. The Perinuclear space portion of the chain corresponds to Ser-203–Pro-277. The chain crosses the membrane as a helical span at residues Gly-278 to Phe-298. Residues Thr-299 to Val-676 lie on the Nuclear side of the membrane. Residues Cys-624 to Asp-664 form an RING-type; atypical zinc finger.

Component of the Asi complex, which contains ASI1, ASI2 and ASI3. Interacts directly with ASI1.

The protein resides in the nucleus inner membrane. The enzyme catalyses S-ubiquitinyl-[E2 ubiquitin-conjugating enzyme]-L-cysteine + [acceptor protein]-L-lysine = [E2 ubiquitin-conjugating enzyme]-L-cysteine + N(6)-ubiquitinyl-[acceptor protein]-L-lysine.. Functionally, part of the nuclear inner membrane (INM)-specific branch of the ER-associated degradation (ERAD) pathway, required for the elimination of misfolded proteins in the INM, a specialized ER subdomain. Required for ERG11 degradation. Negative regulator of SPS-sensor signaling. Together with ASI2 and ASI3, prevents the unprocessed precursor forms of STP1 and STP2 that escape cytoplasmic anchoring from inducing SPS-sensor-regulated genes in the absence of inducing signals. Controls amino acid permease (AAP) gene expression in response to amino acid availability, a process mediated by the transcription factors STP1 and STP1. This Saccharomyces cerevisiae (strain ATCC 204508 / S288c) (Baker's yeast) protein is Probable ERAD-associated E3 ubiquitin-protein ligase ASI1 (ASI3).